Reading from the N-terminus, the 25-residue chain is Arginine attenuator peptide (25 aa).

The protein belongs to the arginine attenuator peptide family.

Its function is as follows. Arginine attenuator peptide (AAP) that has a regulatory role in the production of arginine-specific carbamoyl phosphate synthetase. Encoded by an upstream open reading frame (uORF) within the 5'-leader region of arginine-specific carbamoyl phosphate synthetase small chain (CPA1) mRNA, it attenuates the translation of the downstream CPA1 ORF. In the presence of high concentrations of arginine, ribosomes translating the uORF encoding AAP stall at the termination codon, resulting in reduced translation from the downstream CPA1 initiation codon. The chain is Arginine attenuator peptide from Saccharomyces cerevisiae (strain ATCC 204508 / S288c) (Baker's yeast).